Consider the following 203-residue polypeptide: Casparian strip membrane protein 1 (203 aa).

At Ala2 the chain carries N-acetylalanine. Residues 2–40 are Cytoplasmic-facing; it reads AKESTTIDVGEPSTVTKSSSHVVKKKGFVAAAAGGGAKR. A helical membrane pass occupies residues 41–61; sequence GLAIFDFLLRLAAIGVTIGAA. The Extracellular portion of the chain corresponds to 62-92; sequence SVMYTAQETLPFFTQFLQFQAGYDDLPAFQY. Residues 93-113 traverse the membrane as a helical segment; that stretch reads FVIAVAIVASYLVLSLPFSIV. Over 114-124 the chain is Cytoplasmic; the sequence is TIVRPLAVAPR. Residues 125-145 traverse the membrane as a helical segment; it reads LILLIFDTLVVTLNTSAAAAA. Residues 146–177 lie on the Extracellular side of the membrane; sequence ASIVYLAHNGNQSTNWLPICQQFGDFCQNVST. Residues Asn156 and Asn174 are each glycosylated (N-linked (GlcNAc...) asparagine). A helical membrane pass occupies residues 178–198; that stretch reads AVVAASIAILFFIVLIIISAI. The Cytoplasmic segment spans residues 199-203; it reads ALKRH.

This sequence belongs to the Casparian strip membrane proteins (CASP) family. Homodimer and heterodimers.

The protein localises to the cell membrane. In terms of biological role, regulates membrane-cell wall junctions and localized cell wall deposition. Required for establishment of the Casparian strip membrane domain (CSD) and the subsequent formation of Casparian strips, a cell wall modification of the root endodermis that determines an apoplastic barrier between the intraorganismal apoplasm and the extraorganismal apoplasm and prevents lateral diffusion. The sequence is that of Casparian strip membrane protein 1 from Arabidopsis lyrata subsp. lyrata (Lyre-leaved rock-cress).